We begin with the raw amino-acid sequence, 708 residues long: Phosphate acetyltransferase (708 aa).

Positions 388-708 are phosphate acetyltransferase; that stretch reads EFCYNLKLLS…TIALTSIQSE (321 aa).

In the N-terminal section; belongs to the CobB/CobQ family. It in the C-terminal section; belongs to the phosphate acetyltransferase and butyryltransferase family. Homohexamer.

It is found in the cytoplasm. It carries out the reaction acetyl-CoA + phosphate = acetyl phosphate + CoA. It functions in the pathway metabolic intermediate biosynthesis; acetyl-CoA biosynthesis; acetyl-CoA from acetate: step 2/2. Its function is as follows. Involved in acetate metabolism. The sequence is that of Phosphate acetyltransferase (pta) from Buchnera aphidicola subsp. Acyrthosiphon pisum (strain APS) (Acyrthosiphon pisum symbiotic bacterium).